The following is a 185-amino-acid chain: V-type proton ATPase subunit E (185 aa).

The protein belongs to the V-ATPase E subunit family.

In terms of biological role, produces ATP from ADP in the presence of a proton gradient across the membrane. In Deinococcus deserti (strain DSM 17065 / CIP 109153 / LMG 22923 / VCD115), this protein is V-type proton ATPase subunit E.